The sequence spans 1301 residues: ABC transporter BEA3 (1301 aa).

Residues 1–30 are disordered; the sequence is MGKRTAENSAANGEGEEKHPEIGVDGRPEK. The segment covering 15 to 30 has biased composition (basic and acidic residues); that stretch reads GEEKHPEIGVDGRPEK. 4 consecutive transmembrane segments (helical) span residues 54 to 74, 103 to 123, 177 to 197, and 203 to 223; these read VGVI…IVFG, LYLL…NFAF, LGVF…AFIY, and LVTF…LPYI. The region spanning 54-345 is the ABC transmembrane type-1 1 domain; the sequence is VGVIASIGVG…ISTPLLAVSK (292 aa). N-linked (GlcNAc...) asparagine glycosylation is present at asparagine 229. 2 helical membrane passes run 281 to 301 and 313 to 333; these read FIAL…GLAF and INQL…VTAM. The ABC transporter 1 domain occupies 378 to 667; the sequence is IILEDVTFAY…EAGLYYNLVN (290 aa). An ATP-binding site is contributed by 413–420; it reads GPSGSGKS. The span at 442 to 454 shows a compositional bias: basic and acidic residues; that stretch reads VEKPTDKKNNGGK. The interval 442 to 461 is disordered; that stretch reads VEKPTDKKNNGGKEEDEQEL. N-linked (GlcNAc...) asparagine glycosylation is found at asparagine 511 and asparagine 618. Positions 682–708 are disordered; the sequence is VIAKEERPSSVHEKAHTESTIEEKPLE. One can recognise an ABC transmembrane type-1 2 domain in the interval 735 to 1024; that stretch reads ALTLFFSACA…ALSFGPNVAQ (290 aa). A run of 6 helical transmembrane segments spans residues 745–765, 779–799, 858–878, 880–900, 961–981, and 987–1007; these read GAAV…FGYL, SLMW…TFFL, SVFI…AFAW, LALV…YWRM, WVSL…AIVL, and LLLS…SVLN. Residues 1060–1296 form the ABC transporter 2 domain; sequence IELENIYFKY…RGVYWQMCQS (237 aa). 1094-1101 provides a ligand contact to ATP; that stretch reads GASGSGKS.

This sequence belongs to the ABC transporter superfamily. ABCB family. Multidrug resistance exporter (TC 3.A.1.201) subfamily.

The protein resides in the cell membrane. ABC transporter; part of the gene cluster that mediates the biosynthesis of beauvericin (BEA), a non-ribosomal cyclic hexadepsipeptide that shows antibiotic, antifungal, insecticidal, and cancer cell antiproliferative and antihaptotactic activity. Functions as a regulator of beauvericin production, rather than in BEA transport out of the cell. Beauvericin has low toxicity to the producing fungus and BEA3 does not play a role in detoxification and self-protection of the producing fungus. This chain is ABC transporter BEA3, found in Gibberella fujikuroi (strain CBS 195.34 / IMI 58289 / NRRL A-6831) (Bakanae and foot rot disease fungus).